The primary structure comprises 787 residues: Integrin beta-3 (787 aa).

The N-terminal stretch at 1 to 25 (MRAQWPGQLWAALLALGALAGVVVG) is a signal peptide. Over 26-717 (ESNICTTRGV…EEPECPKGPD (692 aa)) the chain is Extracellular. The 47-residue stretch at 29 to 75 (ICTTRGVNSCQQCLAVSPVCAWCSDETLSQGSPRCNLKENLLKDNCA) folds into the PSI domain. 19 cysteine pairs are disulfide-bonded: Cys30–Cys48, Cys38–Cys460, Cys41–Cys63, Cys51–Cys74, Cys202–Cys209, Cys257–Cys298, Cys399–Cys411, Cys431–Cys458, Cys462–Cys482, Cys473–Cys485, Cys487–Cys496, Cys498–Cys528, Cys511–Cys526, Cys520–Cys531, Cys533–Cys546, Cys548–Cys569, Cys553–Cys567, Cys561–Cys572, and Cys574–Cys583. Residues 134–376 (DYPVDIYYLM…QLIVDAYGKI (243 aa)) enclose the VWFA domain. Residues Ser146 and Ser148 each contribute to the Mg(2+) site. The Ca(2+) site is built by Ser148, Asp151, Asp152, and Asp183. The tract at residues 202-209 (CYNMKNAC) is CX3CL1-binding. Residues 202–209 (CYNMKNAC) are involved in CX3CL1-, NRG1-, FGF1- and IGF1-binding. Ca(2+) is bound by residues Asn240, Asp242, Pro244, Glu245, and Asp276. Glu245 contributes to the Mg(2+) binding site. The interval 292-312 (LPNDGHCHIGTDNHYSASTTM) is CX3CL1-binding. N-linked (GlcNAc...) asparagine glycosylation is found at Asn345 and Asn396. I-EGF domains follow at residues 462-497 (CQAF…SMCE), 498-547 (CSEE…KYCE), 548-584 (CDDF…YYCN), and 585-624 (CTTR…DTCE). N-linked (GlcNAc...) asparagine glycosylation occurs at Asn477. Residue Asn584 is glycosylated (N-linked (GlcNAc...) asparagine). Cystine bridges form between Cys585–Cys608, Cys592–Cys606, Cys600–Cys611, Cys613–Cys623, Cys626–Cys629, Cys633–Cys680, Cys639–Cys660, Cys642–Cys656, and Cys688–Cys712. The N-linked (GlcNAc...) asparagine glycan is linked to Asn679. The chain crosses the membrane as a helical span at residues 718 to 740 (ILVVLLSVMGAILLIGLATLLIW). Topologically, residues 741-787 (KLLITIHDRKEFAKFEEERARAKWDTANNPLYKEATSTFTNITYRGT) are cytoplasmic. Thr766 is subject to Phosphothreonine. Residue Tyr772 is modified to Phosphotyrosine. The LIR signature appears at 776 to 782 (TSTFTNI). Phosphothreonine is present on Thr778. Tyr784 carries the post-translational modification Phosphotyrosine.

This sequence belongs to the integrin beta chain family. In terms of assembly, heterodimer of an alpha and a beta subunit. Beta-3 (ITGB3) associates with either alpha-IIB (ITGA2B) or alpha-V (ITGAV). Interacts with FLNB and COMP. Interacts with PDIA6 following platelet stimulation. Interacts with SYK; upon activation by ITGB3 promotes platelet adhesion. Interacts with MYO10. Interacts with DAB2. Interacts with FERMT2. Integrin ITGAV:ITGB3 interacts with FBLN5 (via N-terminus). Interacts with EMP2; regulates the levels of the heterodimer ITGA5:ITGB3 integrin expression on the plasma membrane. ITGAV:ITGB3 interacts with CCN3. ITGAV:ITGB3 and ITGA2B:ITGB3 interact with SELP (via C-type lectin domain); the interaction mediates cell-cell interaction and adhesion. ITGAV:ITGB3 interacts with AGRA2. ITGAV:ITGB3 is found in a ternary complex with CX3CR1 and CX3CL1. ITGAV:ITGB3 is found in a ternary complex with NRG1 and ERBB3. ITGAV:ITGB3 is found in a ternary complex with FGF1 and FGFR1. ITGAV:ITGB3 interacts with FGF2; it is likely that FGF2 can simultaneously bind ITGAV:ITGB3 and FGF receptors. ITGAV:ITGB3 binds to IL1B. ITGAV:ITGB3 is found in a ternary complex with IGF1 and IGF1R. ITGAV:ITGB3 interacts with IGF2. ITGAV:ITGB3 interacts with FBN1. ITGAV:ITGB3 interacts with CD9, CD81 and CD151 (via second extracellular domain). Interacts (via the allosteric site (site 2)) with CXCL12 in a CXCR4-independent manner. Interacts with MXRA8/DICAM; the interaction inhibits ITGAV:ITGB3 heterodimer formation. ITGAV:ITGB3 interacts with PTN. Forms a complex with PTPRZ1 and PTN that stimulates endothelial cell migration through ITGB3 Tyr-772 phosphorylation. ITGAV:ITGB3 interacts with SLC6A4. Interacts with SLC6A4 (via C-terminus); this interaction regulates SLC6A4 trafficking. ITGA2B:ITGB3 interacts with PPIA/CYPA; the interaction is ROS and PPIase activity-dependent and is increased in the presence of thrombin. Interacts with tensin TNS3; TNS3 also interacts with PEAK1, thus acting as an adapter molecule to bridge the association of PEAK1 with ITGB3. Interacts with TM4SF19. Phosphorylated on tyrosine residues in response to thrombin-induced platelet aggregation. Probably involved in outside-in signaling.

It localises to the cell membrane. The protein localises to the cell projection. The protein resides in the lamellipodium membrane. Its subcellular location is the cell junction. It is found in the focal adhesion. It localises to the postsynaptic cell membrane. The protein localises to the synapse. In terms of biological role, integrin alpha-V/beta-3 (ITGAV:ITGB3) is a receptor for cytotactin, fibronectin, laminin, matrix metalloproteinase-2, osteopontin, osteomodulin, prothrombin, thrombospondin, vitronectin and von Willebrand factor. Integrin alpha-IIB/beta-3 (ITGA2B:ITGB3) is a receptor for fibronectin, fibrinogen, plasminogen, prothrombin, thrombospondin and vitronectin. Integrins alpha-IIB/beta-3 and alpha-V/beta-3 recognize the sequence R-G-D in a wide array of ligands. Integrin alpha-IIB/beta-3 recognizes the sequence H-H-L-G-G-G-A-K-Q-A-G-D-V in fibrinogen gamma chain. Following activation integrin alpha-IIB/beta-3 brings about platelet/platelet interaction through binding of soluble fibrinogen. This step leads to rapid platelet aggregation which physically plugs ruptured endothelial surfaces. Fibrinogen binding enhances SELP expression in activated platelets. ITGAV:ITGB3 binds to fractalkine (CX3CL1) and acts as its coreceptor in CX3CR1-dependent fractalkine signaling. ITGAV:ITGB3 binds to NRG1 (via EGF domain) and this binding is essential for NRG1-ERBB signaling. ITGAV:ITGB3 binds to FGF1 and this binding is essential for FGF1 signaling. ITGAV:ITGB3 binds to FGF2 and this binding is essential for FGF2 signaling. ITGAV:ITGB3 binds to IGF1 and this binding is essential for IGF1 signaling. ITGAV:ITGB3 binds to IGF2 and this binding is essential for IGF2 signaling. ITGAV:ITGB3 binds to IL1B and this binding is essential for IL1B signaling. ITGAV:ITGB3 binds to PLA2G2A via a site (site 2) which is distinct from the classical ligand-binding site (site 1) and this induces integrin conformational changes and enhanced ligand binding to site 1. ITGAV:ITGB3 acts as a receptor for fibrillin-1 (FBN1) and mediates R-G-D-dependent cell adhesion to FBN1. ITGAV:ITGB3 binds to the Lilrb4a/Gp49b receptor and enhances the Lilrb4a-mediated inhibition of mast cell activation. ITGAV:ITGB3 also suppresses marginal zone B cell antibody production through its interaction with Lilrb4a. In brain, plays a role in synaptic transmission and plasticity. Involved in the regulation of the serotonin neurotransmission, is required to localize to specific compartments within the synapse the serotonin receptor SLC6A4 and for an appropriate reuptake of serotonin. Controls excitatory synaptic strength by regulating GRIA2-containing AMPAR endocytosis, which affects AMPAR abundance and composition. ITGAV:ITGB3 act as a receptor for CD40LG. ITGAV:ITGB3 acts as a receptor for IBSP and promotes cell adhesion and migration to IBSP. This chain is Integrin beta-3, found in Mus musculus (Mouse).